Here is a 270-residue protein sequence, read N- to C-terminus: MQSKLLLSTKLTSQGKTQLDQYFVSPPFKVMTLPAYDDAWQNGLNAMQMSSSPGLLASDLFDIEISLADDTALSLNTQAFTRVQSMNEGDYATQKTCIKLGKNSRLFYLPHPLVLHKDSSFKQTTEIEMSEQSELIYGEIVAIGRVLNGERFAFRHFASYLRISYQNRPIIADRIQWLPAKMALTSLSQMEDFSHQGSLTYVNLAKNAVEIKAMVSELQALAAEQKNMLIGVSQLNEGGLMVRVLAHRADIIQHLFERIGQVLKAQSNIV.

The protein belongs to the UreD family. As to quaternary structure, ureD, UreF and UreG form a complex that acts as a GTP-hydrolysis-dependent molecular chaperone, activating the urease apoprotein by helping to assemble the nickel containing metallocenter of UreC. The UreE protein probably delivers the nickel.

It is found in the cytoplasm. Its function is as follows. Required for maturation of urease via the functional incorporation of the urease nickel metallocenter. The protein is Urease accessory protein UreD of Actinobacillus pleuropneumoniae serotype 3 (strain JL03).